We begin with the raw amino-acid sequence, 92 residues long: Small ribosomal subunit protein uS19c (92 aa).

The protein belongs to the universal ribosomal protein uS19 family.

The protein resides in the plastid. Its subcellular location is the chloroplast. Functionally, protein S19 forms a complex with S13 that binds strongly to the 16S ribosomal RNA. The polypeptide is Small ribosomal subunit protein uS19c (rps19) (Pisum sativum (Garden pea)).